A 421-amino-acid polypeptide reads, in one-letter code: Glycosaminoglycan xylosylkinase homolog (421 aa).

The N-terminal stretch at 1–21 (MNKRSVIIAGIVASLLGLALG) is a signal peptide. The N-linked (GlcNAc...) asparagine glycan is linked to N83. 2 residues coordinate ATP: Q131 and K147. Mn(2+) is bound at residue D166. Disulfide bonds link C225–C240 and C230–C233. 252 to 255 (IYIV) serves as a coordination point for ATP. 2 disulfides stabilise this stretch: C285–C351 and C352–C409. Residue D314 is part of the active site. ATP-binding residues include E319 and D329. Residue D329 coordinates Mn(2+).

The protein belongs to the FAM20 family. The cofactor is Mn(2+).

The protein resides in the golgi apparatus. The protein localises to the endoplasmic reticulum. The enzyme catalyses 3-O-(beta-D-galactosyl-(1-&gt;3)-beta-D-galactosyl-(1-&gt;4)-beta-D-xylosyl)-L-seryl-[protein] + ATP = 3-O-(beta-D-galactosyl-(1-&gt;3)-beta-D-galactosyl-(1-&gt;4)-beta-D-2-O-phosphoxylosyl)-L-seryl-[protein] + ADP + H(+). Functionally, kylose kinase that mediates the 2-O-phosphorylation of xylose in the glycosaminoglycan-protein linkage region of proteoglycans. This Drosophila melanogaster (Fruit fly) protein is Glycosaminoglycan xylosylkinase homolog.